We begin with the raw amino-acid sequence, 265 residues long: Tryptophan synthase alpha chain (265 aa).

Catalysis depends on proton acceptor residues glutamate 49 and glutamate 60.

Belongs to the TrpA family. Tetramer of two alpha and two beta chains.

It carries out the reaction (1S,2R)-1-C-(indol-3-yl)glycerol 3-phosphate + L-serine = D-glyceraldehyde 3-phosphate + L-tryptophan + H2O. It participates in amino-acid biosynthesis; L-tryptophan biosynthesis; L-tryptophan from chorismate: step 5/5. Its function is as follows. The alpha subunit is responsible for the aldol cleavage of indoleglycerol phosphate to indole and glyceraldehyde 3-phosphate. In Janthinobacterium sp. (strain Marseille) (Minibacterium massiliensis), this protein is Tryptophan synthase alpha chain.